We begin with the raw amino-acid sequence, 685 residues long: ATP-dependent RNA helicase MSS116, mitochondrial (685 aa).

Residues 1-34 constitute a mitochondrion transit peptide; sequence MLVLQRIPKRALQFNGVTGTVCSTRLFHHAFNLN. Positions 42 to 107 are disordered; it reads SEERRYRNSN…NNGSRRRYQD (66 aa). Positions 58–69 are enriched in low complexity; it reads SDSNSNNKYRNS. Positions 70-86 are enriched in basic and acidic residues; the sequence is SYDDNRSRSNYGGDKRN. The segment covering 88-99 has biased composition (low complexity); the sequence is RNNNNYGNNRNN. A Q motif motif is present at residues 138 to 166; that stretch reads SLLEESLLDANVHKAISAMKFESLTPVQQ. The 188-residue stretch at 170 to 357 folds into the Helicase ATP-binding domain; that stretch reads KPILTTENDV…ATIMNKKDCL (188 aa). 183–190 serves as a coordination point for ATP; that stretch reads AKTGTGKT. Positions 298–301 match the DEAD box motif; it reads DEAD. A Helicase C-terminal domain is found at 386–542; sequence SMVALIQSIE…EDYLNQDKEN (157 aa). Positions 633 to 685 are disordered; that stretch reads DREFDDEDRYTSRSQNNYKSKQSSKSNRFEGRNDYSNSRRSHANQKRNFTFDD. The segment covering 644-658 has biased composition (low complexity); the sequence is SRSQNNYKSKQSSKS.

This sequence belongs to the DEAD box helicase family. DDX18/HAS1 subfamily.

The protein localises to the mitochondrion matrix. The enzyme catalyses ATP + H2O = ADP + phosphate + H(+). Its function is as follows. ATP-dependent RNA helicase required for mitochondrial splicing of group I and II introns. Also required for efficient mitochondrial translation. The polypeptide is ATP-dependent RNA helicase MSS116, mitochondrial (MSS116) (Kluyveromyces lactis (strain ATCC 8585 / CBS 2359 / DSM 70799 / NBRC 1267 / NRRL Y-1140 / WM37) (Yeast)).